The chain runs to 210 residues: Ion-translocating oxidoreductase complex subunit G (210 aa).

The chain crosses the membrane as a helical span at residues 9–29; sequence GVTLAVFAAITTGLTAVINAV. Thr175 carries the FMN phosphoryl threonine modification.

The protein belongs to the RnfG family. As to quaternary structure, the complex is composed of six subunits: RnfA, RnfB, RnfC, RnfD, RnfE and RnfG. FMN is required as a cofactor.

It localises to the cell inner membrane. Its function is as follows. Part of a membrane-bound complex that couples electron transfer with translocation of ions across the membrane. This chain is Ion-translocating oxidoreductase complex subunit G, found in Erwinia tasmaniensis (strain DSM 17950 / CFBP 7177 / CIP 109463 / NCPPB 4357 / Et1/99).